A 356-amino-acid chain; its full sequence is Protein pelota homolog (356 aa).

This sequence belongs to the eukaryotic release factor 1 family. Pelota subfamily. Monomer. A divalent metal cation serves as cofactor.

The protein resides in the cytoplasm. In terms of biological role, may function in recognizing stalled ribosomes, interact with stem-loop structures in stalled mRNA molecules, and effect endonucleolytic cleavage of the mRNA. May play a role in the release non-functional ribosomes and degradation of damaged mRNAs. Has endoribonuclease activity. This chain is Protein pelota homolog, found in Staphylothermus marinus (strain ATCC 43588 / DSM 3639 / JCM 9404 / F1).